Consider the following 225-residue polypeptide: Pyridoxine/pyridoxamine 5'-phosphate oxidase (225 aa).

Substrate contacts are provided by residues 9–12 (RVDY) and Lys-78. FMN is bound by residues 73 to 78 (RTVLCK), 88 to 89 (YT), Lys-95, and Gln-117. Substrate-binding residues include Tyr-135, Arg-139, and Ser-143. Residues 152–153 (QS) and Trp-198 contribute to the FMN site. A substrate-binding site is contributed by 204–206 (RLH). Arg-208 is an FMN binding site.

The protein belongs to the pyridoxamine 5'-phosphate oxidase family. In terms of assembly, homodimer. Requires FMN as cofactor.

It catalyses the reaction pyridoxamine 5'-phosphate + O2 + H2O = pyridoxal 5'-phosphate + H2O2 + NH4(+). The catalysed reaction is pyridoxine 5'-phosphate + O2 = pyridoxal 5'-phosphate + H2O2. The protein operates within cofactor metabolism; pyridoxal 5'-phosphate salvage; pyridoxal 5'-phosphate from pyridoxamine 5'-phosphate: step 1/1. Its pathway is cofactor metabolism; pyridoxal 5'-phosphate salvage; pyridoxal 5'-phosphate from pyridoxine 5'-phosphate: step 1/1. Catalyzes the oxidation of either pyridoxine 5'-phosphate (PNP) or pyridoxamine 5'-phosphate (PMP) into pyridoxal 5'-phosphate (PLP). The chain is Pyridoxine/pyridoxamine 5'-phosphate oxidase from Nocardia farcinica (strain IFM 10152).